Reading from the N-terminus, the 89-residue chain is Small ribosomal subunit protein bS18 (89 aa).

This sequence belongs to the bacterial ribosomal protein bS18 family. Part of the 30S ribosomal subunit. Forms a tight heterodimer with protein bS6.

In terms of biological role, binds as a heterodimer with protein bS6 to the central domain of the 16S rRNA, where it helps stabilize the platform of the 30S subunit. The chain is Small ribosomal subunit protein bS18 from Bdellovibrio bacteriovorus (strain ATCC 15356 / DSM 50701 / NCIMB 9529 / HD100).